Here is a 447-residue protein sequence, read N- to C-terminus: Tubulin beta-5 chain (447 aa).

Residues glutamine 11, glutamate 69, serine 138, glycine 142, threonine 143, glycine 144, asparagine 204, and asparagine 226 each contribute to the GTP site. Residue glutamate 69 participates in Mg(2+) binding.

It belongs to the tubulin family. Dimer of alpha and beta chains. A typical microtubule is a hollow water-filled tube with an outer diameter of 25 nm and an inner diameter of 15 nM. Alpha-beta heterodimers associate head-to-tail to form protofilaments running lengthwise along the microtubule wall with the beta-tubulin subunit facing the microtubule plus end conferring a structural polarity. Microtubules usually have 13 protofilaments but different protofilament numbers can be found in some organisms and specialized cells. The cofactor is Mg(2+).

Its subcellular location is the cytoplasm. The protein localises to the cytoskeleton. In terms of biological role, tubulin is the major constituent of microtubules, a cylinder consisting of laterally associated linear protofilaments composed of alpha- and beta-tubulin heterodimers. Microtubules grow by the addition of GTP-tubulin dimers to the microtubule end, where a stabilizing cap forms. Below the cap, tubulin dimers are in GDP-bound state, owing to GTPase activity of alpha-tubulin. This Triticum aestivum (Wheat) protein is Tubulin beta-5 chain (TUBB5).